Consider the following 396-residue polypeptide: Elongation factor Tu 2 (396 aa).

One can recognise a tr-type G domain in the interval 10 to 206 (KPHCNIGTIG…AVDAYIPQPE (197 aa)). The segment at 19-26 (GHVDHGKT) is G1. Residue 19-26 (GHVDHGKT) coordinates GTP. Residue Thr26 coordinates Mg(2+). The interval 60–64 (GITIS) is G2. The tract at residues 81-84 (DCPG) is G3. Residues 81-85 (DCPGH) and 136-139 (NKCD) contribute to the GTP site. Residues 136 to 139 (NKCD) form a G4 region. Positions 174–176 (SAL) are G5.

Belongs to the TRAFAC class translation factor GTPase superfamily. Classic translation factor GTPase family. EF-Tu/EF-1A subfamily. In terms of assembly, monomer.

The protein resides in the cytoplasm. The catalysed reaction is GTP + H2O = GDP + phosphate + H(+). GTP hydrolase that promotes the GTP-dependent binding of aminoacyl-tRNA to the A-site of ribosomes during protein biosynthesis. The sequence is that of Elongation factor Tu 2 from Rhodopseudomonas palustris (strain BisB5).